We begin with the raw amino-acid sequence, 197 residues long: dITP/XTP pyrophosphatase (197 aa).

8–13 (TGNAGK) is a substrate binding site. Residues E40 and D69 each contribute to the Mg(2+) site. The active-site Proton acceptor is the D69. Substrate-binding positions include S70, 154 to 157 (FGYD), K177, and 182 to 183 (HR).

The protein belongs to the HAM1 NTPase family. As to quaternary structure, homodimer. Mg(2+) is required as a cofactor.

The catalysed reaction is XTP + H2O = XMP + diphosphate + H(+). It catalyses the reaction dITP + H2O = dIMP + diphosphate + H(+). It carries out the reaction ITP + H2O = IMP + diphosphate + H(+). Pyrophosphatase that catalyzes the hydrolysis of nucleoside triphosphates to their monophosphate derivatives, with a high preference for the non-canonical purine nucleotides XTP (xanthosine triphosphate), dITP (deoxyinosine triphosphate) and ITP. Seems to function as a house-cleaning enzyme that removes non-canonical purine nucleotides from the nucleotide pool, thus preventing their incorporation into DNA/RNA and avoiding chromosomal lesions. The polypeptide is dITP/XTP pyrophosphatase (rdgB) (Shigella flexneri).